The following is a 92-amino-acid chain: Small ribosomal subunit protein uS19c (92 aa).

This sequence belongs to the universal ribosomal protein uS19 family.

The protein resides in the plastid. It is found in the chloroplast. Protein S19 forms a complex with S13 that binds strongly to the 16S ribosomal RNA. The protein is Small ribosomal subunit protein uS19c (rps19) of Porphyra purpurea (Red seaweed).